The primary structure comprises 486 residues: ATP synthase subunit beta (486 aa).

164–171 (GGAGVGKT) provides a ligand contact to ATP.

The protein belongs to the ATPase alpha/beta chains family. As to quaternary structure, F-type ATPases have 2 components, CF(1) - the catalytic core - and CF(0) - the membrane proton channel. CF(1) has five subunits: alpha(3), beta(3), gamma(1), delta(1), epsilon(1). CF(0) has four main subunits: a(1), b(1), b'(1) and c(9-12).

It localises to the cellular thylakoid membrane. It carries out the reaction ATP + H2O + 4 H(+)(in) = ADP + phosphate + 5 H(+)(out). Its function is as follows. Produces ATP from ADP in the presence of a proton gradient across the membrane. The catalytic sites are hosted primarily by the beta subunits. In Prochlorococcus marinus (strain MIT 9301), this protein is ATP synthase subunit beta.